The primary structure comprises 158 residues: Protein BTG2 (158 aa).

Serine 147 is subject to Phosphoserine; by MAPK1 and MAPK3. The residue at position 149 (serine 149) is a Phosphoserine; by MAPK14.

It belongs to the BTG family. In terms of assembly, interacts with PRKCABP. Interacts with CNOT7 and CNOT8; indicative for an association with the CCR4-NOT complex. Interacts with PIN1, inducing mitochondrial depolarization. Phosphorylated at Ser-147 by MAPK1/ERK2 and MAPK3/ERK1, and at Ser-149 by MAPK14, leading to PIN1-binding and mitochondrial depolarization. As to expression, in brain at embryonic day 13.5, placenta, amnion, and spleen, which are proliferating and/or differentiating.

Anti-proliferative protein; the function is mediated by association with deadenylase subunits of the CCR4-NOT complex. Activates mRNA deadenylation in a CNOT6 and CNOT7-dependent manner. In vitro can inhibit deadenylase activity of CNOT7 and CNOT8. Involved in cell cycle regulation. Could be involved in the growth arrest and differentiation of the neuronal precursors. Modulates transcription regulation mediated by ESR1. Involved in mitochondrial depolarization and neurite outgrowth. The protein is Protein BTG2 (Btg2) of Rattus norvegicus (Rat).